Consider the following 157-residue polypeptide: Mini-ribonuclease 3 (157 aa).

Asp18 is a catalytic residue. A disordered region spans residues 126-157; the sequence is EEDEGKGKGETAKEEESITDALSPAEQSEIDC. Residues 130 to 141 are compositionally biased toward basic and acidic residues; sequence GKGKGETAKEEE.

It belongs to the MrnC RNase family. As to quaternary structure, homodimer. It depends on Mg(2+) as a cofactor.

Its subcellular location is the cytoplasm. Involved in correct processing of both the 5' and 3' ends of 23S rRNA precursor. Processes 30S rRNA precursor transcript even in absence of ribonuclease 3 (Rnc); Rnc processes 30S rRNA into smaller rRNA precursors. The chain is Mini-ribonuclease 3 from Desulfitobacterium hafniense (strain Y51).